We begin with the raw amino-acid sequence, 729 residues long: Fatty acid oxidation complex subunit alpha (729 aa).

Residues 1–189 form an enoyl-CoA hydratase/isomerase region; the sequence is MLYKGDTLYL…KIGLVDGVVK (189 aa). Substrate is bound at residue D296. The 3-hydroxyacyl-CoA dehydrogenase stretch occupies residues 311-729; that stretch reads ETPKHAAVLG…ARPVGELKTA (419 aa). Residues M324, D343, 400–402, K407, and S429 each bind NAD(+); that span reads VVE. Catalysis depends on H450, which acts as the For 3-hydroxyacyl-CoA dehydrogenase activity. Residue N453 coordinates NAD(+). 2 residues coordinate substrate: N500 and Y660.

The protein in the N-terminal section; belongs to the enoyl-CoA hydratase/isomerase family. This sequence in the C-terminal section; belongs to the 3-hydroxyacyl-CoA dehydrogenase family. Heterotetramer of two alpha chains (FadB) and two beta chains (FadA).

It catalyses the reaction a (3S)-3-hydroxyacyl-CoA + NAD(+) = a 3-oxoacyl-CoA + NADH + H(+). The catalysed reaction is a (3S)-3-hydroxyacyl-CoA = a (2E)-enoyl-CoA + H2O. The enzyme catalyses a 4-saturated-(3S)-3-hydroxyacyl-CoA = a (3E)-enoyl-CoA + H2O. It carries out the reaction (3S)-3-hydroxybutanoyl-CoA = (3R)-3-hydroxybutanoyl-CoA. It catalyses the reaction a (3Z)-enoyl-CoA = a 4-saturated (2E)-enoyl-CoA. The catalysed reaction is a (3E)-enoyl-CoA = a 4-saturated (2E)-enoyl-CoA. It participates in lipid metabolism; fatty acid beta-oxidation. In terms of biological role, involved in the aerobic and anaerobic degradation of long-chain fatty acids via beta-oxidation cycle. Catalyzes the formation of 3-oxoacyl-CoA from enoyl-CoA via L-3-hydroxyacyl-CoA. It can also use D-3-hydroxyacyl-CoA and cis-3-enoyl-CoA as substrate. In Enterobacter cloacae, this protein is Fatty acid oxidation complex subunit alpha.